The following is a 330-amino-acid chain: Type II restriction enzyme Cfr9I (330 aa).

It belongs to the XcyI type II restriction endonuclease family. Mg(2+) is required as a cofactor.

It catalyses the reaction Endonucleolytic cleavage of DNA to give specific double-stranded fragments with terminal 5'-phosphates.. Its function is as follows. An E and P subtype restriction enzyme that recognizes the double-stranded sequence 5'-CCCGGG-3' and cleaves after C-1. The protein is Type II restriction enzyme Cfr9I (cfr9IR) of Citrobacter freundii.